Reading from the N-terminus, the 586-residue chain is Pyruvate kinase (586 aa).

Arg32 lines the substrate pocket. The K(+) site is built by Asn34, Ser36, Asp66, and Thr67. Residue 34 to 37 participates in ATP binding; it reads NFSH. ATP contacts are provided by Arg73 and Lys156. A Mg(2+)-binding site is contributed by Glu222. 3 residues coordinate substrate: Gly245, Asp246, and Thr278. Asp246 lines the Mg(2+) pocket.

This sequence belongs to the pyruvate kinase family. The protein in the C-terminal section; belongs to the PEP-utilizing enzyme family. Mg(2+) is required as a cofactor. Requires K(+) as cofactor.

The enzyme catalyses pyruvate + ATP = phosphoenolpyruvate + ADP + H(+). Its pathway is carbohydrate degradation; glycolysis; pyruvate from D-glyceraldehyde 3-phosphate: step 5/5. This is Pyruvate kinase (pyk) from Staphylococcus haemolyticus (strain JCSC1435).